A 330-amino-acid chain; its full sequence is Ketol-acid reductoisomerase (NADP(+)) (330 aa).

Positions 1-181 (MNVYYEQDAD…GGAKAGVIET (181 aa)) constitute a KARI N-terminal Rossmann domain. Residues 24–27 (YGSQ), arginine 47, serine 50, serine 52, and 82–85 (DQYQ) contribute to the NADP(+) site. Histidine 107 is an active-site residue. Position 133 (glycine 133) interacts with NADP(+). The KARI C-terminal knotted domain occupies 182-327 (TIKDETETDL…AKLRNMMSWL (146 aa)). Aspartate 190, glutamate 194, glutamate 226, and glutamate 230 together coordinate Mg(2+). Serine 251 serves as a coordination point for substrate.

It belongs to the ketol-acid reductoisomerase family. The cofactor is Mg(2+).

It catalyses the reaction (2R)-2,3-dihydroxy-3-methylbutanoate + NADP(+) = (2S)-2-acetolactate + NADPH + H(+). The enzyme catalyses (2R,3R)-2,3-dihydroxy-3-methylpentanoate + NADP(+) = (S)-2-ethyl-2-hydroxy-3-oxobutanoate + NADPH + H(+). The protein operates within amino-acid biosynthesis; L-isoleucine biosynthesis; L-isoleucine from 2-oxobutanoate: step 2/4. It functions in the pathway amino-acid biosynthesis; L-valine biosynthesis; L-valine from pyruvate: step 2/4. Functionally, involved in the biosynthesis of branched-chain amino acids (BCAA). Catalyzes an alkyl-migration followed by a ketol-acid reduction of (S)-2-acetolactate (S2AL) to yield (R)-2,3-dihydroxy-isovalerate. In the isomerase reaction, S2AL is rearranged via a Mg-dependent methyl migration to produce 3-hydroxy-3-methyl-2-ketobutyrate (HMKB). In the reductase reaction, this 2-ketoacid undergoes a metal-dependent reduction by NADPH to yield (R)-2,3-dihydroxy-isovalerate. The polypeptide is Ketol-acid reductoisomerase (NADP(+)) (Prosthecochloris aestuarii (strain DSM 271 / SK 413)).